The primary structure comprises 78 residues: Acyl carrier protein (78 aa).

The region spanning M1–K76 is the Carrier domain. Position 36 is an O-(pantetheine 4'-phosphoryl)serine (S36).

This sequence belongs to the acyl carrier protein (ACP) family. Post-translationally, 4'-phosphopantetheine is transferred from CoA to a specific serine of apo-ACP by AcpS. This modification is essential for activity because fatty acids are bound in thioester linkage to the sulfhydryl of the prosthetic group.

It localises to the cytoplasm. Its pathway is lipid metabolism; fatty acid biosynthesis. Its function is as follows. Carrier of the growing fatty acid chain in fatty acid biosynthesis. The chain is Acyl carrier protein from Helicobacter pylori (strain ATCC 700392 / 26695) (Campylobacter pylori).